Consider the following 356-residue polypeptide: Fructose-1,6-bisphosphatase class 1 1 (356 aa).

Residues E106, D129, L131, and D132 each coordinate Mg(2+). Substrate contacts are provided by residues 132–135, N225, Y258, and K288; that span reads DGSS. E294 is a Mg(2+) binding site.

The protein belongs to the FBPase class 1 family. In terms of assembly, homotetramer. Requires Mg(2+) as cofactor.

The protein localises to the cytoplasm. The catalysed reaction is beta-D-fructose 1,6-bisphosphate + H2O = beta-D-fructose 6-phosphate + phosphate. It participates in carbohydrate biosynthesis; gluconeogenesis. This is Fructose-1,6-bisphosphatase class 1 1 from Salinibacter ruber (strain DSM 13855 / M31).